A 217-amino-acid polypeptide reads, in one-letter code: Adenylate kinase (217 aa).

10-15 lines the ATP pocket; that stretch reads GAGKGT. The segment at 30-59 is NMP; that stretch reads STGDIFRQNLRDNTDLGKLAKEYMDKGLLV. AMP contacts are provided by residues T31, R36, 57–59, 85–88, and Q92; these read LLV and GYPR. Residues 126–163 are LID; the sequence is GRRVCPNCGATYHIKTSPPAVDNVCDKCGAQLIQRSDD. R127 contacts ATP. Zn(2+) contacts are provided by C130 and C133. 136 to 137 is a binding site for ATP; that stretch reads TY. Zn(2+)-binding residues include C150 and C153. The AMP site is built by R160 and R171. K199 is a binding site for ATP.

It belongs to the adenylate kinase family. In terms of assembly, monomer.

The protein resides in the cytoplasm. The enzyme catalyses AMP + ATP = 2 ADP. Its pathway is purine metabolism; AMP biosynthesis via salvage pathway; AMP from ADP: step 1/1. In terms of biological role, catalyzes the reversible transfer of the terminal phosphate group between ATP and AMP. Plays an important role in cellular energy homeostasis and in adenine nucleotide metabolism. This is Adenylate kinase from Thermoanaerobacter pseudethanolicus (strain ATCC 33223 / 39E) (Clostridium thermohydrosulfuricum).